The sequence spans 551 residues: Small ribosomal subunit protein bS1 (551 aa).

S1 motif domains lie at 21 to 83, 101 to 167, 188 to 256, 273 to 343, 360 to 430, and 447 to 516; these read GALV…LSRE, GEMV…VSRR, GQEI…LGMK, NSRV…LGIK, DEKI…LGIK, and DAVI…VSHK.

Belongs to the bacterial ribosomal protein bS1 family.

Its function is as follows. Binds mRNA; thus facilitating recognition of the initiation point. It is needed to translate mRNA with a short Shine-Dalgarno (SD) purine-rich sequence. The sequence is that of Small ribosomal subunit protein bS1 (rpsA) from Coxiella burnetii (strain RSA 493 / Nine Mile phase I).